The sequence spans 548 residues: Probable malate:quinone oxidoreductase (548 aa).

The tract at residues 521 to 548 is disordered; the sequence is DKPQAADSTPKPQLKPQPVQKEVADIAL. Positions 530–541 are enriched in low complexity; it reads PKPQLKPQPVQK.

Belongs to the MQO family. FAD is required as a cofactor.

The enzyme catalyses (S)-malate + a quinone = a quinol + oxaloacetate. Its pathway is carbohydrate metabolism; tricarboxylic acid cycle; oxaloacetate from (S)-malate (quinone route): step 1/1. The sequence is that of Probable malate:quinone oxidoreductase from Shigella boydii serotype 4 (strain Sb227).